The following is a 67-amino-acid chain: Small integral membrane protein 20 (67 aa).

The Mitochondrial matrix portion of the chain corresponds to 1–6 (MSRNLR). The chain crosses the membrane as a helical span at residues 7-27 (TALIFGGFISLIGAAFYPIYF). The Mitochondrial intermembrane portion of the chain corresponds to 28 to 67 (RPLMRLEEYKKEQAINRAGIVQEDVQPPGLKVWSDPFGRK). Phenylalanine 64 carries the phenylalanine amide modification.

As to quaternary structure, component of the MITRAC (mitochondrial translation regulation assembly intermediate of cytochrome c oxidase complex) complex, the core components of this complex being COA3/MITRAC12 and COX14. Interacts with COA3/MITRAC12 and COX4I1. Directly interacts with newly synthesized MT-CO1/COX1. In terms of tissue distribution, expressed in the ovary, specifically in granulosa cells of follicles that have passed the primary stage and in oocytes (at protein level).

Its subcellular location is the mitochondrion inner membrane. It localises to the secreted. Component of the MITRAC (mitochondrial translation regulation assembly intermediate of cytochrome c oxidase complex) complex, that regulates cytochrome c oxidase assembly. Promotes the progression of complex assembly after the association of MT-CO1/COX1 with COX4I1 and COX6C. Chaperone-like assembly factor required to stabilize newly synthesized MT-CO1/COX1 and to prevent its premature turnover. In terms of biological role, peptide involved in a broad spectrum of regulatory functions. Is a ligand for GPR173. As part of the reproductive cycle, it regulates gonadotropin-releasing hormone (GnRH) signaling in the hypothalamus and pituitary gland which augments the release of luteinizing hormone. Plays a protective role in memory retention through activation of GNRHR. Regulates the secretion of AVP by hypothalamic neurons. Plays a role in the transduction of the itch sensation. Induces anxiolytic effects, reducing behavior associated with anxiety. Regulates food intake as well as satiation and satiety. In the ovary, it regulates follicular growth by stimulating granulosa cell proliferation by increasing the expression of GPR173, CREB1, CYP19A1, KITLG, FSHR, and LHCGR. It also increases the production of estradiol (E2). In the heart, it regulates contractility and relaxation. It also plays a cardioprotective role during ischemia, where it activates the SAFE and RISK pathways. Stimulates the proliferation and differentiation of preadipocytes. In pancreatic islet cells, it induces proliferation of islet cells as well as the production of INS. The sequence is that of Small integral membrane protein 20 (SMIM20) from Homo sapiens (Human).